Reading from the N-terminus, the 257-residue chain is uncharacterized protein (257 aa).

A signal peptide spans 1-22; it reads MIHSRKLRLWLYLVLLAVFIGA. Cys-23 carries the N-palmitoyl cysteine lipid modification. Residue Cys-23 is the site of S-diacylglycerol cysteine attachment.

This sequence belongs to the staphylococcal tandem lipoprotein family.

The protein localises to the cell membrane. This is an uncharacterized protein from Staphylococcus aureus (strain Mu50 / ATCC 700699).